Reading from the N-terminus, the 305-residue chain is Tyrosine recombinase XerC (305 aa).

In terms of domain architecture, Core-binding (CB) spans 2 to 88 (TNKQRLVHLF…ALRSFYKFLL (87 aa)). Residues 109 to 295 (RIPSFLYEEE…SKDSLRKTYM (187 aa)) form the Tyr recombinase domain. Active-site residues include Arg149, Lys173, His247, Arg250, and His273. Tyr282 serves as the catalytic O-(3'-phospho-DNA)-tyrosine intermediate.

The protein belongs to the 'phage' integrase family. XerC subfamily. As to quaternary structure, forms a cyclic heterotetrameric complex composed of two molecules of XerC and two molecules of XerD.

The protein localises to the cytoplasm. Functionally, site-specific tyrosine recombinase, which acts by catalyzing the cutting and rejoining of the recombining DNA molecules. The XerC-XerD complex is essential to convert dimers of the bacterial chromosome into monomers to permit their segregation at cell division. It also contributes to the segregational stability of plasmids. This Bacillus pumilus (strain SAFR-032) protein is Tyrosine recombinase XerC.